Here is a 177-residue protein sequence, read N- to C-terminus: ATP synthase subunit delta (177 aa).

This sequence belongs to the ATPase delta chain family. F-type ATPases have 2 components, F(1) - the catalytic core - and F(0) - the membrane proton channel. F(1) has five subunits: alpha(3), beta(3), gamma(1), delta(1), epsilon(1). F(0) has three main subunits: a(1), b(2) and c(10-14). The alpha and beta chains form an alternating ring which encloses part of the gamma chain. F(1) is attached to F(0) by a central stalk formed by the gamma and epsilon chains, while a peripheral stalk is formed by the delta and b chains.

It localises to the cell inner membrane. Its function is as follows. F(1)F(0) ATP synthase produces ATP from ADP in the presence of a proton or sodium gradient. F-type ATPases consist of two structural domains, F(1) containing the extramembraneous catalytic core and F(0) containing the membrane proton channel, linked together by a central stalk and a peripheral stalk. During catalysis, ATP synthesis in the catalytic domain of F(1) is coupled via a rotary mechanism of the central stalk subunits to proton translocation. This protein is part of the stalk that links CF(0) to CF(1). It either transmits conformational changes from CF(0) to CF(1) or is implicated in proton conduction. The protein is ATP synthase subunit delta of Sodalis glossinidius (strain morsitans).